The chain runs to 712 residues: Cyclolysin secretion/processing ATP-binding protein CyaB (712 aa).

Residues 7–128 (QCASVPDSGL…ALWAGELLLC (122 aa)) enclose the Peptidase C39 domain. An ABC transmembrane type-1 domain is found at 157-439 (IGEVLLISLV…LAQLWNDFQQ (283 aa)). The next 6 helical transmembrane spans lie at 160–180 (VLLISLVLQFISLLTPLFFQV), 194–214 (LNVIAVGFLAAILFEALLTGI), 272–292 (AVTVLLDVVFSVVFIAVMFFY), 298–318 (LVVLAALPCYFLLSLVLTPVL), 367–387 (VAAGLSVANVAMLANTGVTLI), and 390–410 (LVALGVLWVGATEVVAQRMTV). In terms of domain architecture, ABC transporter spans 471–706 (IELDRVSFRY…GGLYARLQAL (236 aa)). Position 505–512 (505–512 (GRSGSGKS)) interacts with ATP.

It belongs to the ABC transporter superfamily. Cyclolysin exporter (TC 3.A.1.109.2) family.

It localises to the cell membrane. Functionally, involved in the export of calmodulin-sensitive adenylate cyclase-hemolysin (cyclolysin). The chain is Cyclolysin secretion/processing ATP-binding protein CyaB (cyaB) from Bordetella pertussis (strain ATCC 9797 / DSM 5571 / CCUG 30873 / LMG 14455 / NCTC 10739 / 18323).